Reading from the N-terminus, the 103-residue chain is Histone H4 (103 aa).

Positions 1–32 (MNTQSIGAKGKSKAAKGIAKRHRKQSSLSDSI) are disordered. The segment covering 10 to 25 (GKSKAAKGIAKRHRKQ) has biased composition (basic residues). The residue at position 16 (Lys-16) is an N6-acetyl-N6-methyllysine; alternate. Lys-16 is subject to N6-methyllysine; alternate. The DNA-binding element occupies 20–24 (KRHRK). Residue Lys-94 is modified to N6-glutaryllysine.

It belongs to the histone H4 family. As to quaternary structure, the nucleosome is a histone octamer containing two molecules each of H2A, H2B, H3 and H4 assembled in one H3-H4 heterotetramer and two H2A-H2B heterodimers. The octamer wraps approximately 147 bp of DNA. Post-translationally, glutarylation at Lys-94 (H4K91glu) destabilizes nucleosomes by promoting dissociation of the H2A-H2B dimers from nucleosomes.

It is found in the nucleus. Its subcellular location is the chromosome. In terms of biological role, core component of nucleosome. Nucleosomes wrap and compact DNA into chromatin, limiting DNA accessibility to the cellular machineries which require DNA as a template. Histones thereby play a central role in transcription regulation, DNA repair, DNA replication and chromosomal stability. DNA accessibility is regulated via a complex set of post-translational modifications of histones, also called histone code, and nucleosome remodeling. The protein is Histone H4 (HHF1) of Encephalitozoon cuniculi (strain GB-M1) (Microsporidian parasite).